The primary structure comprises 95 residues: Aspartyl/glutamyl-tRNA(Asn/Gln) amidotransferase subunit C (95 aa).

This sequence belongs to the GatC family. Heterotrimer of A, B and C subunits.

It catalyses the reaction L-glutamyl-tRNA(Gln) + L-glutamine + ATP + H2O = L-glutaminyl-tRNA(Gln) + L-glutamate + ADP + phosphate + H(+). The enzyme catalyses L-aspartyl-tRNA(Asn) + L-glutamine + ATP + H2O = L-asparaginyl-tRNA(Asn) + L-glutamate + ADP + phosphate + 2 H(+). Functionally, allows the formation of correctly charged Asn-tRNA(Asn) or Gln-tRNA(Gln) through the transamidation of misacylated Asp-tRNA(Asn) or Glu-tRNA(Gln) in organisms which lack either or both of asparaginyl-tRNA or glutaminyl-tRNA synthetases. The reaction takes place in the presence of glutamine and ATP through an activated phospho-Asp-tRNA(Asn) or phospho-Glu-tRNA(Gln). The sequence is that of Aspartyl/glutamyl-tRNA(Asn/Gln) amidotransferase subunit C from Bradyrhizobium sp. (strain ORS 278).